The sequence spans 148 residues: 3-hydroxyacyl-[acyl-carrier-protein] dehydratase FabZ (148 aa).

Residue His48 is part of the active site.

Belongs to the thioester dehydratase family. FabZ subfamily.

Its subcellular location is the cytoplasm. It carries out the reaction a (3R)-hydroxyacyl-[ACP] = a (2E)-enoyl-[ACP] + H2O. Involved in unsaturated fatty acids biosynthesis. Catalyzes the dehydration of short chain beta-hydroxyacyl-ACPs and long chain saturated and unsaturated beta-hydroxyacyl-ACPs. The polypeptide is 3-hydroxyacyl-[acyl-carrier-protein] dehydratase FabZ (Campylobacter curvus (strain 525.92)).